The sequence spans 130 residues: Small ribosomal subunit protein bS6 (130 aa).

A disordered region spans residues 96-130; it reads VTEASPMAKARDERDSRRSPSDDRIEEESAEENAE. The span at 104–118 shows a compositional bias: basic and acidic residues; that stretch reads KARDERDSRRSPSDD. The segment covering 119-130 has biased composition (acidic residues); the sequence is RIEEESAEENAE.

Belongs to the bacterial ribosomal protein bS6 family.

Binds together with bS18 to 16S ribosomal RNA. This is Small ribosomal subunit protein bS6 from Shewanella denitrificans (strain OS217 / ATCC BAA-1090 / DSM 15013).